A 301-amino-acid polypeptide reads, in one-letter code: 3-methyl-2-oxobutanoate hydroxymethyltransferase (301 aa).

Positions 1-12 are enriched in polar residues; the sequence is MAPSNLPESTTP. The interval 1-24 is disordered; that stretch reads MAPSNLPESTTPAEVPAPYGTGPA. Residues aspartate 82 and aspartate 121 each contribute to the Mg(2+) site. 3-methyl-2-oxobutanoate is bound by residues 82–83, aspartate 121, and lysine 151; that span reads DS. Glutamate 153 serves as a coordination point for Mg(2+). The Proton acceptor role is filled by glutamate 219.

The protein belongs to the PanB family. Homodecamer; pentamer of dimers. Mg(2+) is required as a cofactor.

Its subcellular location is the cytoplasm. It catalyses the reaction 3-methyl-2-oxobutanoate + (6R)-5,10-methylene-5,6,7,8-tetrahydrofolate + H2O = 2-dehydropantoate + (6S)-5,6,7,8-tetrahydrofolate. The protein operates within cofactor biosynthesis; (R)-pantothenate biosynthesis; (R)-pantoate from 3-methyl-2-oxobutanoate: step 1/2. Functionally, catalyzes the reversible reaction in which hydroxymethyl group from 5,10-methylenetetrahydrofolate is transferred onto alpha-ketoisovalerate to form ketopantoate. This is 3-methyl-2-oxobutanoate hydroxymethyltransferase from Paenarthrobacter aurescens (strain TC1).